Consider the following 149-residue polypeptide: UPF0178 protein Sama_3557 (149 aa).

Belongs to the UPF0178 family.

The protein is UPF0178 protein Sama_3557 of Shewanella amazonensis (strain ATCC BAA-1098 / SB2B).